We begin with the raw amino-acid sequence, 745 residues long: Elongation factor G, mitochondrial (745 aa).

In terms of domain architecture, tr-type G spans 40-317 (ERIRNIGISA…AVLDYLPNPG (278 aa)). GTP is bound by residues 49 to 56 (AHIDSGKT), 116 to 120 (DTPGH), and 170 to 173 (NKLD).

Belongs to the TRAFAC class translation factor GTPase superfamily. Classic translation factor GTPase family. EF-G/EF-2 subfamily.

The protein localises to the mitochondrion. The protein operates within protein biosynthesis; polypeptide chain elongation. Functionally, mitochondrial GTPase that catalyzes the GTP-dependent ribosomal translocation step during translation elongation. During this step, the ribosome changes from the pre-translocational (PRE) to the post-translocational (POST) state as the newly formed A-site-bound peptidyl-tRNA and P-site-bound deacylated tRNA move to the P and E sites, respectively. Catalyzes the coordinated movement of the two tRNA molecules, the mRNA and conformational changes in the ribosome. Essential during development as it acts as a retrograde signal from mitochondria to the nucleus to slow down cell proliferation if mitochondrial energy output is low. The protein is Elongation factor G, mitochondrial of Drosophila melanogaster (Fruit fly).